The following is a 436-amino-acid chain: 3-ketoacyl-CoA thiolase (436 aa).

The Acyl-thioester intermediate role is filled by cysteine 99. Catalysis depends on proton acceptor residues histidine 392 and cysteine 422.

Belongs to the thiolase-like superfamily. Thiolase family. Heterotetramer of two alpha chains (FadJ) and two beta chains (FadI).

The protein resides in the cytoplasm. It carries out the reaction an acyl-CoA + acetyl-CoA = a 3-oxoacyl-CoA + CoA. The protein operates within lipid metabolism; fatty acid beta-oxidation. In terms of biological role, catalyzes the final step of fatty acid oxidation in which acetyl-CoA is released and the CoA ester of a fatty acid two carbons shorter is formed. This chain is 3-ketoacyl-CoA thiolase, found in Escherichia coli O157:H7.